The following is a 526-amino-acid chain: MSVEVEYLQHEDYLYRTSKLKEIRDLGINPYPYQYTDCLEVQEIRNQFVDNELGDSEAAFRKETPKVRFAGRLVLFRSMGKNAFGQILDNDAKIQVMFNRDFSAVAGLAADAGISPIKFIEKKLDLGDILGLEGYLFFTHSGELTVLVETVTLLCKSLISLPDKHAGLADKEIRYRKRWADLISSEDVRKTFLTRSRILKLIREYMDQQSFLEVETPILQTVYGGAEATPFVTTLQALHAEMFLRISLEIALKKLLVGGMSRVYEIGKVFRNEGIDRTHNPEFTMIEAYAAYWDYNDVMKCVENLVEYIVRALNNGETQVQYSHLKSGPQVVDFKAPWIRMTMKESISVYGGVDVDLHADHELRKILETQTSLPEKTYVHASRGELIALLFDELVCDKLIAPHHITDHPLETTPLCKTLRSGDETLVERFESFCLGKELCNAYSELNDPLQQRKLLEEQMRKKALNPDSEYHPIDEEFLEALCQGMPPAGGFGIGIDRLVMMLTDAASIRDVLFFPVMRRIEAKKD.

Glu-431 and Glu-438 together coordinate Mg(2+).

Belongs to the class-II aminoacyl-tRNA synthetase family. Homodimer. Mg(2+) serves as cofactor.

It localises to the cytoplasm. It carries out the reaction tRNA(Lys) + L-lysine + ATP = L-lysyl-tRNA(Lys) + AMP + diphosphate. The sequence is that of Lysine--tRNA ligase from Chlamydia trachomatis serovar L2b (strain UCH-1/proctitis).